Reading from the N-terminus, the 266-residue chain is Protein crossbronx-like (266 aa).

Residues 15-178 (KQGYHILAEY…VQEQAIASRN (164 aa)) enclose the UBC core domain.

The protein belongs to the ubiquitin-conjugating enzyme family. FTS subfamily.

The polypeptide is Protein crossbronx-like (Drosophila yakuba (Fruit fly)).